The sequence spans 105 residues: Meiotically up-regulated gene 52 protein (105 aa).

Has a role in meiosis. The sequence is that of Meiotically up-regulated gene 52 protein (mug52) from Schizosaccharomyces pombe (strain 972 / ATCC 24843) (Fission yeast).